Consider the following 566-residue polypeptide: MIGKWRMGLWALAILTVPMYFIVTEGRKTSWGLENEALIVRCPQRGGAINPVEWYYSNTNERIPTQKRNRIFVSRDRLKFLPAKVEDSGIYTCVIRSPESIKTGSLNVTIYKRPPNCKIPDYMMYSTVDGSDKNSKITCPTIALYNWTAPVQWFKNCKALQGPRFRAHMSYLFIDKVSHVDEGDYTCRFTHTENGTNYIVTATRSFTVEEKGFSTFPVITNPPHNYTVEVEIGKTANIACSACFGTASQFVAVLWQINKTRIGSFGKARIQEEKGPNKSSSNGMICLTSLLRITGVTDKDFSLKYDCVAMNHHGVIRHPVRLRRKQPIDHQSTYYIVAGCSLLLMFINVLVIVLKVFWIEVALFWRDIMAPYKTQNDGKLYDAYIIYPRVFRGSAAGTGSVEYFVHYTLPDVLENKCGYKLCIYGRDLLPGQDAATVVESSIQNSRRQVFVLAPHMMHSKEFAYEQEIALHSALIQNNSKVILIEMEPMGEASRLQLGDLQDSLQHLVKMQGTIKWREDHVADKQSLSSKFWKHVRYQMPVPKRPPKMASVAAPLSGKVCLDLKHF.

The first 26 residues, 1-26 (MIGKWRMGLWALAILTVPMYFIVTEG), serve as a signal peptide directing secretion. 3 Ig-like C2-type domains span residues 27 to 109 (RKTS…LNVT), 120 to 207 (PDYM…RSFT), and 217 to 323 (PVIT…VRLR). At 27 to 331 (RKTSWGLENE…LRRKQPIDHQ (305 aa)) the chain is on the extracellular side. A disulfide bridge links C42 with C93. N107, N146, and N194 each carry an N-linked (GlcNAc...) asparagine glycan. 2 cysteine pairs are disulfide-bonded: C117-C157 and C139-C187. The interval 204–216 (RSFTVEEKGFSTF) is flexible linker. N-linked (GlcNAc...) asparagine glycans are attached at residues N225, N258, and N277. Cystine bridges form between C240/C307 and C243/C286. K325 participates in a covalent cross-link: Glycyl lysine isopeptide (Lys-Gly) (interchain with G-Cter in ubiquitin). The helical transmembrane segment at 332-354 (STYYIVAGCSLLLMFINVLVIVL) threads the bilayer. Residues 355–566 (KVFWIEVALF…GKVCLDLKHF (212 aa)) are Cytoplasmic-facing. Positions 379–539 (KLYDAYIIYP…KFWKHVRYQM (161 aa)) constitute a TIR domain. S441 bears the Phosphoserine mark. E465 is a catalytic residue.

It belongs to the interleukin-1 receptor family. In terms of assembly, interacts with MYD88, IRAK1, IRAK4, and TRAF6. Bound to its ligand IL-33, interacts with IL1RAP to form the minimal interleukin-33 signaling complex with a 1:1:1 stoichiometry. Interacts with KIT (bound to KITLG/SCF). A mast cell-specific KITLG/SCF-induced interleukin-33 signaling complex contains IL1RL1, IL1RAP, KIT and MYD88. Interacts with TMED1. Phosphorylated by GSK3B at Ser-441; leading to proteasomal degradation. Post-translationally, ubiquitinated at Lys-325 in a FBXL19-mediated manner; leading to proteasomal degradation. Ubiquitination by TRAF6 via 'Lys-27'-linked polyubiquitination and deubiquitination by USP38 serves as a critical regulatory mechanism for fine-tuning IL1RL1-mediated inflammatory response. Isoform A is detected in spleen, lung, bone marrow and lymh node. Isoform B is predominant in fibroblasts.

Its subcellular location is the cell membrane. The protein resides in the secreted. The enzyme catalyses NAD(+) + H2O = ADP-D-ribose + nicotinamide + H(+). In terms of biological role, receptor for interleukin-33 (IL-33) which plays crucial roles in innate and adaptive immunity, contributing to tissue homeostasis and responses to environmental stresses together with coreceptor IL1RAP. Its stimulation recruits MYD88, IRAK1, IRAK4, and TRAF6, followed by phosphorylation of MAPK3/ERK1 and/or MAPK1/ERK2, MAPK14, and MAPK8. Possibly involved in helper T-cell function. Upon tissue injury, induces UCP2-dependent mitochondrial rewiring that attenuates the generation of reactive oxygen species and preserves the integrity of Krebs cycle required for persistent production of itaconate and subsequent GATA3-dependent differentiation of inflammation-resolving alternatively activated macrophages. Inhibits IL-33 signaling. This chain is Interleukin-1 receptor-like 1 (Il1rl1), found in Rattus norvegicus (Rat).